The primary structure comprises 401 residues: Argininosuccinate synthase (401 aa).

Position 9–17 (9–17) interacts with ATP; it reads AYSGGLDTS. Tyr-86 serves as a coordination point for L-citrulline. Gly-116 contacts ATP. Residues Thr-118, Asn-122, and Asp-123 each contribute to the L-aspartate site. Asn-122 lines the L-citrulline pocket. L-citrulline contacts are provided by Arg-126, Ser-174, Ser-183, Glu-259, and Tyr-271.

It belongs to the argininosuccinate synthase family. Type 1 subfamily. As to quaternary structure, homotetramer.

Its subcellular location is the cytoplasm. It catalyses the reaction L-citrulline + L-aspartate + ATP = 2-(N(omega)-L-arginino)succinate + AMP + diphosphate + H(+). The protein operates within amino-acid biosynthesis; L-arginine biosynthesis; L-arginine from L-ornithine and carbamoyl phosphate: step 2/3. The sequence is that of Argininosuccinate synthase from Bacillus cereus (strain AH820).